The primary structure comprises 466 residues: Transcription factor SOX-10 (466 aa).

5 disordered regions span residues Met1–Lys67, Leu160–Ala200, Asp213–Asn275, Thr344–Thr375, and Arg433–Pro466. The span at Leu23–Gly32 shows a compositional bias: low complexity. Ser24 is subject to Phosphoserine. Positions Glu62–Pro102 are dimerization (DIM). Residues Val104–Lys172 constitute a DNA-binding region (HMG box). Residues Leu160–Tyr173 show a composition bias toward basic and acidic residues. Residues Ala183–Ala200 are compositionally biased toward low complexity. A transactivation domain (TAM) region spans residues Pro228–Val310. Basic and acidic residues predominate over residues Ala254–Ile271. Residues Lys353–Pro466 form a transactivation domain (TAC) region. Positions Ser440 to Pro466 are enriched in polar residues.

As to quaternary structure, monomer. Interacts with Armcx3 at the mitochondrial outer membrane surface. Interacts with PAX3. Expressed in oligodendroglia of the spinal tube (at protein level).

It is found in the cytoplasm. Its subcellular location is the nucleus. It localises to the mitochondrion outer membrane. In terms of biological role, transcription factor that plays a central role in developing and mature glia. Specifically activates expression of myelin genes, during oligodendrocyte (OL) maturation, such as DUSP15 and MYRF, thereby playing a central role in oligodendrocyte maturation and CNS myelination. Once induced, MYRF cooperates with SOX10 to implement the myelination program. Transcriptional activator of MITF, acting synergistically with PAX3. Transcriptional activator of MBP, via binding to the gene promoter. The polypeptide is Transcription factor SOX-10 (Sox10) (Mus musculus (Mouse)).